Here is a 153-residue protein sequence, read N- to C-terminus: Glucose-6-phosphate 1-dehydrogenase (153 aa).

The NADP(+) site is built by Arg-21 and Lys-120. D-glucose 6-phosphate is bound at residue Lys-120.

This sequence belongs to the glucose-6-phosphate dehydrogenase family.

It localises to the cytoplasm. The protein localises to the cytosol. It carries out the reaction D-glucose 6-phosphate + NADP(+) = 6-phospho-D-glucono-1,5-lactone + NADPH + H(+). It participates in carbohydrate degradation; pentose phosphate pathway; D-ribulose 5-phosphate from D-glucose 6-phosphate (oxidative stage): step 1/3. Cytosolic glucose-6-phosphate dehydrogenase that catalyzes the first and rate-limiting step of the oxidative branch within the pentose phosphate pathway/shunt, an alternative route to glycolysis for the dissimilation of carbohydrates and a major source of reducing power and metabolic intermediates for fatty acid and nucleic acid biosynthetic processes. The chain is Glucose-6-phosphate 1-dehydrogenase (ZW) from Sarcophaga bullata (Grey flesh fly).